The primary structure comprises 361 residues: Fructose-bisphosphate aldolase (361 aa).

Residue S63 participates in D-glyceraldehyde 3-phosphate binding. Catalysis depends on D110, which acts as the Proton donor. 4 residues coordinate Zn(2+): H111, D145, E175, and H227. G228 provides a ligand contact to dihydroxyacetone phosphate. Position 266 (H266) interacts with Zn(2+). Residues 267–269 and 288–291 contribute to the dihydroxyacetone phosphate site; these read GGS and NLDT.

It belongs to the class II fructose-bisphosphate aldolase family. As to quaternary structure, homodimer. Zn(2+) serves as cofactor.

The catalysed reaction is beta-D-fructose 1,6-bisphosphate = D-glyceraldehyde 3-phosphate + dihydroxyacetone phosphate. It functions in the pathway carbohydrate degradation; glycolysis; D-glyceraldehyde 3-phosphate and glycerone phosphate from D-glucose: step 4/4. Functionally, catalyzes the aldol condensation of dihydroxyacetone phosphate (DHAP or glycerone-phosphate) with glyceraldehyde 3-phosphate (G3P) to form fructose 1,6-bisphosphate (FBP) in gluconeogenesis and the reverse reaction in glycolysis. In Kluyveromyces lactis (strain ATCC 8585 / CBS 2359 / DSM 70799 / NBRC 1267 / NRRL Y-1140 / WM37) (Yeast), this protein is Fructose-bisphosphate aldolase (FBA1).